We begin with the raw amino-acid sequence, 340 residues long: Holliday junction branch migration complex subunit RuvB (340 aa).

The large ATPase domain (RuvB-L) stretch occupies residues 1-182 (MSDIDPTVRA…FGIPTRLQFY (182 aa)). Residues Leu-21, Arg-22, Gly-63, Lys-66, Thr-67, Thr-68, 129-131 (EDF), Arg-172, Tyr-182, and Arg-219 each bind ATP. Residue Thr-67 coordinates Mg(2+). A small ATPAse domain (RuvB-S) region spans residues 183–253 (TEDELFIIVD…LADMALNRLG (71 aa)). A head domain (RuvB-H) region spans residues 256–340 (HLGLDGADRR…PRAQTDLFEG (85 aa)). DNA-binding residues include Arg-292, Arg-311, and Arg-316.

Belongs to the RuvB family. Homohexamer. Forms an RuvA(8)-RuvB(12)-Holliday junction (HJ) complex. HJ DNA is sandwiched between 2 RuvA tetramers; dsDNA enters through RuvA and exits via RuvB. An RuvB hexamer assembles on each DNA strand where it exits the tetramer. Each RuvB hexamer is contacted by two RuvA subunits (via domain III) on 2 adjacent RuvB subunits; this complex drives branch migration. In the full resolvosome a probable DNA-RuvA(4)-RuvB(12)-RuvC(2) complex forms which resolves the HJ.

Its subcellular location is the cytoplasm. It carries out the reaction ATP + H2O = ADP + phosphate + H(+). The RuvA-RuvB-RuvC complex processes Holliday junction (HJ) DNA during genetic recombination and DNA repair, while the RuvA-RuvB complex plays an important role in the rescue of blocked DNA replication forks via replication fork reversal (RFR). RuvA specifically binds to HJ cruciform DNA, conferring on it an open structure. The RuvB hexamer acts as an ATP-dependent pump, pulling dsDNA into and through the RuvAB complex. RuvB forms 2 homohexamers on either side of HJ DNA bound by 1 or 2 RuvA tetramers; 4 subunits per hexamer contact DNA at a time. Coordinated motions by a converter formed by DNA-disengaged RuvB subunits stimulates ATP hydrolysis and nucleotide exchange. Immobilization of the converter enables RuvB to convert the ATP-contained energy into a lever motion, pulling 2 nucleotides of DNA out of the RuvA tetramer per ATP hydrolyzed, thus driving DNA branch migration. The RuvB motors rotate together with the DNA substrate, which together with the progressing nucleotide cycle form the mechanistic basis for DNA recombination by continuous HJ branch migration. Branch migration allows RuvC to scan DNA until it finds its consensus sequence, where it cleaves and resolves cruciform DNA. The chain is Holliday junction branch migration complex subunit RuvB from Roseobacter denitrificans (strain ATCC 33942 / OCh 114) (Erythrobacter sp. (strain OCh 114)).